A 1008-amino-acid chain; its full sequence is Phytosulfokine receptor 1 (1008 aa).

The first 25 residues, 1 to 25 (MRVHRFCVIVIFLTELLCFFYSSES), serve as a signal peptide directing secretion. Residues N55, N64, and N73 are each glycosylated (N-linked (GlcNAc...) asparagine). 12 LRR repeats span residues 75–98 (TGRVIRLELGNKKLSGKLSESLGK), 99–123 (LDEIRVLNLSRNFIKDSIPLSIFNL), 124–148 (KNLQTLDLSSNDLSGGIPTSINLPA), 150–170 (QSFDLSSNKFNGSLPSHICHN), 172–194 (TQIRVVKLAVNYFAGNFTSGFGK), 195–219 (CVLLEHLCLGMNDLTGNIPEDLFHL), 221–243 (RLNLLGIQENRLSGSLSREIRNL), 244–266 (SSLVRLDVSWNLFSGEIPDVFDE), 291–315 (SPSLNLLNLRNNSLSGRLMLNCTAM), 316–339 (IALNSLDLGTNRFNGRLPENLPDC), 341–362 (RLKNVNLARNTFHGQVPESFKN), and 363–387 (FESLSYFSLSNSSLANISSALGILQ). N106 is a glycosylation site (N-linked (GlcNAc...) asparagine). N160, N170, and N187 each carry an N-linked (GlcNAc...) asparagine glycan. N242 carries N-linked (GlcNAc...) asparagine glycosylation. A phytosulfokine-binding site is contributed by R300. 2 N-linked (GlcNAc...) asparagine glycosylation sites follow: N301 and N311. 3 residues coordinate phytosulfokine: N346, S370, and S372. 3 N-linked (GlcNAc...) asparagine glycosylation sites follow: N373, N378, and N391. LRR repeat units lie at residues 392–414 (LTTLVLTLNFHGEALPDDSSLHF), 415–438 (EKLKVLVVANCRLTGSMPRWLSSS), 439–464 (NELQLLDLSWNRLTGAIPSWIGDFKA), and 466–486 (FYLDLSNNSFTGEIPKSLTKL). Positions 398, 424, and 445 each coordinate phytosulfokine. N-linked (GlcNAc...) asparagine glycans are attached at residues N472 and N493. K508 contributes to the phytosulfokine binding site. Residues N510 and N534 are each glycosylated (N-linked (GlcNAc...) asparagine). LRR repeat units lie at residues 521 to 545 (IFGFPPTIELGHNNLSGPIWEEFGN), 546 to 570 (LKKLHVFDLKWNALSGSIPSSLSGM), 571 to 594 (TSLEALDLSNNRLSGSIPVSLQQL), and 596 to 619 (FLSKFSVAYNNLSGVIPSGGQFQT). 2 N-linked (GlcNAc...) asparagine glycosylation sites follow: N606 and N622. The helical transmembrane segment at 660–680 (MAIGIAFGSVFLLTLLSLIVL) threads the bilayer. T731 is modified (phosphothreonine). The 272-residue stretch at 734–1005 (FDQANIIGCG…PTTQQLVSWL (272 aa)) folds into the Protein kinase domain. ATP-binding positions include 740–748 (IGCGGFGMV) and K762. Phosphotyrosine is present on residues Y807 and Y847. D860 (proton acceptor) is an active-site residue. Y902 is subject to Phosphotyrosine.

This sequence belongs to the protein kinase superfamily. Ser/Thr protein kinase family. Homo- and heterodimers with PSY1R. Heterodimers with the somatic embryogenesis receptor-like kinases (SERKs). PSK is not directly involved in PSKR-SERK interaction but stabilizes PSKR island domain for recruitment of a SERK. Part of a functional complex containing PSKR1, BAK1, CNGC17, and AHA. Interacts with AHA1, AHA2, and BAK1, but not with CNGC17 or BRI1. The cofactor is Mg(2+). Mn(2+) serves as cofactor. As to expression, weakly expressed in roots, leaves, stems and flowers. Expressed in the primary and lateral roots, including root primordia and root tips, but not in the hypocotyl.

It is found in the cell membrane. It catalyses the reaction L-seryl-[protein] + ATP = O-phospho-L-seryl-[protein] + ADP + H(+). The catalysed reaction is L-threonyl-[protein] + ATP = O-phospho-L-threonyl-[protein] + ADP + H(+). The enzyme catalyses GTP = 3',5'-cyclic GMP + diphosphate. CGMP suppresses kinase activity. In terms of biological role, phytosulfokine receptor with both a serine/threonine-protein kinase activity and a guanylate cyclase activity. Regulates, in response to phytosulfokine binding, a signaling cascade involved in plant cell differentiation, organogenesis, somatic embryogenesis, cellular proliferation and plant growth. Involved in plant immunity, with antagonistic effects on bacterial and fungal resistances. Not involved in PSY perception. CNGC17 and AHAs form a functional cation-translocating unit that is activated by PSKR1/BAK1 and possibly other BAK1/RLK complexes. The protein is Phytosulfokine receptor 1 of Arabidopsis thaliana (Mouse-ear cress).